Consider the following 393-residue polypeptide: Acetate kinase (393 aa).

Asn6 contacts Mg(2+). ATP is bound at residue Lys13. Arg87 is a substrate binding site. The Proton donor/acceptor role is filled by Asp143. Residues 203–207 (HLGNG), 278–280 (DMR), and 326–330 (GIGEN) contribute to the ATP site. Glu380 is a binding site for Mg(2+).

This sequence belongs to the acetokinase family. Homodimer. Mg(2+) serves as cofactor. It depends on Mn(2+) as a cofactor.

The protein resides in the cytoplasm. It catalyses the reaction acetate + ATP = acetyl phosphate + ADP. It participates in metabolic intermediate biosynthesis; acetyl-CoA biosynthesis; acetyl-CoA from acetate: step 1/2. Catalyzes the formation of acetyl phosphate from acetate and ATP. Can also catalyze the reverse reaction. This Mycoplasma capricolum subsp. capricolum (strain California kid / ATCC 27343 / NCTC 10154) protein is Acetate kinase.